A 94-amino-acid chain; its full sequence is MAELPQSRINERNITSEMRESFLDYAMSVIVSRALPDVRDGLKPVHRRILYGLNEQGMTPDKPYKKSARIVGDVMGKYHPHGDSSIYEAMVRMA.

A Topo IIA-type catalytic domain is found at 35–94 (LPDVRDGLKPVHRRILYGLNEQGMTPDKPYKKSARIVGDVMGKYHPHGDSSIYEAMVRMA).

The protein belongs to the type II topoisomerase GyrA/ParC subunit family. As to quaternary structure, heterotetramer, composed of two GyrA and two GyrB chains. In the heterotetramer, GyrA contains the active site tyrosine that forms a transient covalent intermediate with DNA, while GyrB binds cofactors and catalyzes ATP hydrolysis.

It localises to the cytoplasm. The catalysed reaction is ATP-dependent breakage, passage and rejoining of double-stranded DNA.. A type II topoisomerase that negatively supercoils closed circular double-stranded (ds) DNA in an ATP-dependent manner to modulate DNA topology and maintain chromosomes in an underwound state. Negative supercoiling favors strand separation, and DNA replication, transcription, recombination and repair, all of which involve strand separation. Also able to catalyze the interconversion of other topological isomers of dsDNA rings, including catenanes and knotted rings. Type II topoisomerases break and join 2 DNA strands simultaneously in an ATP-dependent manner. The protein is DNA gyrase subunit A of Staphylococcus epidermidis.